Here is an 819-residue protein sequence, read N- to C-terminus: USP6 N-terminal-like protein (819 aa).

Met-1 bears the N-acetylmethionine mark. One can recognise a Rab-GAP TBC domain in the interval 100-292 (GIPLQLRGEV…RIWDIYIFEG (193 aa)). Residues 355 to 367 (DLPEPGKEDEYPK) are compositionally biased toward basic and acidic residues. Disordered regions lie at residues 355–498 (DLPE…ERTT) and 513–678 (LPVA…SRPT). Ser-389, Ser-394, and Ser-398 each carry phosphoserine. 2 stretches are compositionally biased toward basic and acidic residues: residues 399-414 (SRREDGSPRKNHEHSP) and 432-449 (KSVDEGSKNLKHEAESQR). Low complexity predominate over residues 464 to 476 (HAAANQNSNAISN). Composition is skewed to basic and acidic residues over residues 477 to 489 (VRKEFMPKWRKPS) and 533 to 542 (KALDGGEGKR). Phosphoserine occurs at positions 544 and 547. A compositionally biased stretch (basic and acidic residues) spans 556-571 (ESEHGASAEEGPERTH). A phosphoserine mark is found at Ser-574, Ser-631, Ser-644, Ser-648, Ser-665, Ser-669, and Ser-704. The segment covering 642–655 (FVSTQISPRPQINP) has biased composition (polar residues). Tyr-717 is modified (phosphotyrosine). The segment covering 788–802 (ASPPGYPYAGPSPSA) has biased composition (low complexity). A disordered region spans residues 788-807 (ASPPGYPYAGPSPSAHHYRN).

In terms of assembly, interacts with EPS8.

It is found in the golgi apparatus. The protein resides in the cytoplasmic vesicle. Its function is as follows. Acts as a GTPase-activating protein for RAB5A and RAB43. Involved in receptor trafficking. In complex with EPS8 inhibits internalization of EGFR. Involved in retrograde transport from the endocytic pathway to the Golgi apparatus. Involved in the transport of Shiga toxin from early and recycling endosomes to the trans-Golgi network. Required for structural integrity of the Golgi complex. The sequence is that of USP6 N-terminal-like protein (Usp6nl) from Mus musculus (Mouse).